Here is a 338-residue protein sequence, read N- to C-terminus: Ketol-acid reductoisomerase (NADP(+)) (338 aa).

The KARI N-terminal Rossmann domain occupies 1–181 (MKVYYDKDAD…GGGKAGIIET (181 aa)). Residues 24 to 27 (YGSQ), Arg-47, and Ser-52 each bind NADP(+). His-107 is an active-site residue. Residue Gly-133 participates in NADP(+) binding. Residues 182-327 (NFREETETDL…EKLRAMMPWI (146 aa)) form the KARI C-terminal knotted domain. Mg(2+) is bound by residues Asp-190, Glu-194, Glu-226, and Glu-230. Ser-251 is a substrate binding site.

Belongs to the ketol-acid reductoisomerase family. Requires Mg(2+) as cofactor.

It carries out the reaction (2R)-2,3-dihydroxy-3-methylbutanoate + NADP(+) = (2S)-2-acetolactate + NADPH + H(+). The enzyme catalyses (2R,3R)-2,3-dihydroxy-3-methylpentanoate + NADP(+) = (S)-2-ethyl-2-hydroxy-3-oxobutanoate + NADPH + H(+). Its pathway is amino-acid biosynthesis; L-isoleucine biosynthesis; L-isoleucine from 2-oxobutanoate: step 2/4. It functions in the pathway amino-acid biosynthesis; L-valine biosynthesis; L-valine from pyruvate: step 2/4. Its function is as follows. Involved in the biosynthesis of branched-chain amino acids (BCAA). Catalyzes an alkyl-migration followed by a ketol-acid reduction of (S)-2-acetolactate (S2AL) to yield (R)-2,3-dihydroxy-isovalerate. In the isomerase reaction, S2AL is rearranged via a Mg-dependent methyl migration to produce 3-hydroxy-3-methyl-2-ketobutyrate (HMKB). In the reductase reaction, this 2-ketoacid undergoes a metal-dependent reduction by NADPH to yield (R)-2,3-dihydroxy-isovalerate. The sequence is that of Ketol-acid reductoisomerase (NADP(+)) from Variovorax paradoxus (strain S110).